The primary structure comprises 98 residues: Cuticle protein 67, isoform A (98 aa).

A run of 6 repeats spans residues 7–10 (AAPA), 15–18 (AAPA), 22–25 (AAPA), 79–82 (AAPA), 86–89 (AAPA), and 92–95 (AAPA).

Functionally, component of the cuticle of migratory locust which contains more than 100 different structural proteins. In Locusta migratoria (Migratory locust), this protein is Cuticle protein 67, isoform A.